The sequence spans 509 residues: Src substrate cortactin (509 aa).

Residues 1 to 28 (MWKASAGHAVSITQDDGGADDWETDPDF) are disordered. Acidic residues predominate over residues 17–28 (GGADDWETDPDF). Cortactin repeat units follow at residues 80-116 (ASHG…SQVD), 117-153 (SVRG…SQKD), 154-190 (YSSG…SQKD), 191-227 (YSKG…SQKD), and 228-264 (YVKG…SQKD). Residues Lys87 and Lys107 each carry the N6-acetyllysine modification. Residue Ser113 is modified to Phosphoserine. Arg119 is modified (omega-N-methylarginine). Lys124 is subject to N6-acetyllysine. Lys144 carries the post-translational modification N6-acetyllysine; alternate. Lys144 is covalently cross-linked (Glycyl lysine isopeptide (Lys-Gly) (interchain with G-Cter in SUMO1); alternate). Lys144 participates in a covalent cross-link: Glycyl lysine isopeptide (Lys-Gly) (interchain with G-Cter in SUMO2); alternate. Ser150 carries the post-translational modification Phosphoserine. Residues Lys152, Lys161, and Lys171 each carry the N6-acetyllysine modification. An N6-acetyllysine; alternate modification is found at Lys181. Lys181 participates in a covalent cross-link: Glycyl lysine isopeptide (Lys-Gly) (interchain with G-Cter in SUMO1); alternate. Residue Lys181 forms a Glycyl lysine isopeptide (Lys-Gly) (interchain with G-Cter in SUMO2); alternate linkage. Residues Lys193 and Lys198 each carry the N6-acetyllysine modification. Lys218 participates in a covalent cross-link: Glycyl lysine isopeptide (Lys-Gly) (interchain with G-Cter in SUMO1). Residue Lys235 is modified to N6-acetyllysine. Phosphoserine is present on Ser261. One copy of the Cortactin 6; truncated repeat lies at 265-287 (YAKGFGGKYGVQKDRMDKNASTF). N6-acetyllysine is present on residues Lys267, Lys272, Lys277, and Lys309. Residues 311 to 364 (SNIRANFENLAKEREQEDRRKAEAERAQRMAQERQEQEEARRKLEEQARAKKQT) are a coiled coil. Residues 318–409 (ENLAKEREQE…EPEPEYSTEA (92 aa)) form a disordered region. The span at 320–359 (LAKEREQEDRRKAEAERAQRMAQERQEQEEARRKLEEQAR) shows a compositional bias: basic and acidic residues. Phosphothreonine is present on Thr364. Phosphoserine occurs at positions 368, 370, 380, and 381. Phosphotyrosine; by FAK1 is present on Tyr384. Positions 393 to 406 (EPSYGSSEPEPEYS) are enriched in low complexity. Tyr405 is modified (phosphotyrosine). The residue at position 406 (Ser406) is a Phosphoserine. Residues Tyr429 and Tyr445 each carry the phosphotyrosine; by FAK1 modification. Phosphotyrosine; by SRC is present on residues Tyr445 and Tyr448. An SH3 domain is found at 451–509 (DLGITAIALYDYQAAGDDEISFDPDDVITNIEMIDDGWWRGVCKGRYGLFPANYVELRQ).

Part of a complex composed of NEDD9, AURKA and CTTN; within the complex NEDD9 acts as a scaffold protein and is required for complex formation. Interacts (via N-terminus) with NEDD9. Identified in a complex containing FGFR4, NCAM1, CDH2, PLCG1, FRS2, SRC, SHC1, GAP43 and CTTN. Forms a complex with ABL1 and MYLK. Interacts with SHANK2 and SHANK3 (via its SH3 domain). Interacts with PLXDC2 and SRCIN1. Interacts with SAMSN1 (via SH3 domain). Interacts (via SH3 domain) with ASAP1 (via Pro-rich region). Interacts with FER. Interacts with FGD1. Interacts with ABL2. Interacts with CTTNBP2NL; this interaction may target CTTN to stress fibers. Interacts with CTTNBP2; this interaction may target CTTN at the cell cortex or dendritic spines. Interacts (via SH3 domain) with DNM2. Interacts with ACTN1. Interacts with KCNA2 (via non-phosphorylated C-terminus). Interacts with PTK2/FAK1. Interacts with KCNH1. Interacts (via SH3 domain) with DIP2A (via N-terminus); the interaction enhances CTTN acetylation and is required for proper synaptic transmission. Interacts with XIRP1 (via N-terminus); the interaction promotes CTTN localization to intercalated disks in cardiomyocytes. In terms of processing, acetylated. Phosphorylated by FER. Phosphorylated in response to FGR activation. Phosphorylation by SRC promotes MYLK binding. Tyrosine phosphorylation in transformed cells may contribute to cellular growth regulation and transformation. Phosphorylated by PKN2 at both serine and threonine residues in a GTP-bound Rac1-dependent manner in hyaluronan-induced astrocytes and hence down-regulated CTTN ability to associate with filamentous actin. Phosphorylated on tyrosine residues in response to CHRM1 activation. Phosphorylated by PTK2/FAK1 in response to cell adhesion. In terms of tissue distribution, detected in liver (at protein level).

It is found in the cytoplasm. Its subcellular location is the cytoskeleton. It localises to the cell projection. The protein localises to the lamellipodium. The protein resides in the ruffle. It is found in the dendrite. Its subcellular location is the cell membrane. It localises to the podosome. The protein localises to the cell junction. The protein resides in the focal adhesion. It is found in the membrane. Its subcellular location is the clathrin-coated pit. It localises to the dendritic spine. The protein localises to the cell cortex. The protein resides in the endoplasmic reticulum. Contributes to the organization of the actin cytoskeleton and cell shape. Plays a role in the formation of lamellipodia and in cell migration. Plays a role in the regulation of neuron morphology, axon growth and formation of neuronal growth cones. Through its interaction with CTTNBP2, involved in the regulation of neuronal spine density. Plays a role in focal adhesion assembly and turnover. In complex with ABL1 and MYLK regulates cortical actin-based cytoskeletal rearrangement critical to sphingosine 1-phosphate (S1P)-mediated endothelial cell (EC) barrier enhancement. Plays a role in intracellular protein transport and endocytosis, and in modulating the levels of potassium channels present at the cell membrane. Plays a role in receptor-mediated endocytosis via clathrin-coated pits. Required for stabilization of KCNH1 channels at the cell membrane. The polypeptide is Src substrate cortactin (Rattus norvegicus (Rat)).